The primary structure comprises 532 residues: Nucleobase-ascorbate transporter 6 (532 aa).

A disordered region spans residues M1 to P24. Residues K10–K20 are compositionally biased toward basic and acidic residues. The next 12 membrane-spanning stretches (helical) occupy residues A39–T59, V75–T95, L97–S117, T137–W157, F163–F185, I192–V212, F223–G243, F289–V309, V361–G381, A392–L414, F426–T446, and D463–L483.

It belongs to the nucleobase:cation symporter-2 (NCS2) (TC 2.A.40) family. Expressed in the apical region of cotyledons 4 days after imbibition (DAI). Expressed in the whole vasculature at 12 DAI. Expressed in the root central cylinder and lateral root primordia. Expressed in the vasculature of sepals, filaments, carpels and developing siliques.

It localises to the membrane. This is Nucleobase-ascorbate transporter 6 (NAT6) from Arabidopsis thaliana (Mouse-ear cress).